The following is a 314-amino-acid chain: Serine/threonine-protein phosphatase PP2A-4 catalytic subunit (314 aa).

Residues aspartate 62, histidine 64, aspartate 90, and asparagine 122 each coordinate Mn(2+). Catalysis depends on histidine 123, which acts as the Proton donor. Positions 172 and 246 each coordinate Mn(2+).

It belongs to the PPP phosphatase family. PP-2A subfamily. Mn(2+) serves as cofactor.

The protein localises to the cytoplasm. It catalyses the reaction O-phospho-L-seryl-[protein] + H2O = L-seryl-[protein] + phosphate. The catalysed reaction is O-phospho-L-threonyl-[protein] + H2O = L-threonyl-[protein] + phosphate. This is Serine/threonine-protein phosphatase PP2A-4 catalytic subunit (PP2A4) from Oryza sativa subsp. japonica (Rice).